Here is a 510-residue protein sequence, read N- to C-terminus: UDP-galactopyranose mutase (510 aa).

T18, D38, L46, and G61 together coordinate FAD. 2 residues coordinate UDP-alpha-D-galactose: G61 and G62. H63 provides a ligand contact to FAD. Residues H68, R91, and S93 each coordinate NADH. Positions 68, 91, 93, and 104 each coordinate NADPH. Residues Y104, Q107, M159, Y162, N163, W167, and R182 each contribute to the UDP-alpha-D-galactose site. NADPH is bound at residue N203. N207 serves as a coordination point for UDP-alpha-D-galactose. V242 serves as a coordination point for FAD. NADPH is bound by residues W315 and Y317. UDP-alpha-D-galactose-binding residues include Y317, R327, and Y419. R327 is a binding site for FAD. The NADH site is built by Y419 and R447. Y419 and R447 together coordinate NADPH. Residue R447 participates in FAD binding. Residue Y453 coordinates UDP-alpha-D-galactose. G456, N457, and Q458 together coordinate FAD. N457 contacts UDP-alpha-D-galactose. N457 lines the NADH pocket. N457 lines the NADPH pocket. H460 contacts NADPH. S461 is an FAD binding site.

It belongs to the UDP-galactopyranose/dTDP-fucopyranose mutase family. In terms of assembly, homotetramer. Requires FAD as cofactor.

The catalysed reaction is UDP-alpha-D-galactose = UDP-alpha-D-galactofuranose. In terms of biological role, UDP-galactopyranose mutase, key flavoenzyme of galactofuranose metabolism that catalyzes the 6-to-5 ring contraction of UDP-galactopyranose to UDP-galactofuranose, the donor used by various galacto-furanosyltransferases. Controls the biosynthesis of galactomannan and galactofuranose containing glycoconjugates. The flavin functions as nucleophile, forming a flavin-sugar adduct that facilitates galactose-ring opening and contraction. The binding of UDP-galactopyranose induces profound conformational changes in the enzyme and two loops on opposite sides of the active site move toward each other by over 10 Angstroms to cover the substrate and create a closed active site. The sequence is that of UDP-galactopyranose mutase from Aspergillus fumigatus (Neosartorya fumigata).